A 171-amino-acid polypeptide reads, in one-letter code: Adenine phosphoribosyltransferase (171 aa).

This sequence belongs to the purine/pyrimidine phosphoribosyltransferase family. As to quaternary structure, homodimer.

The protein resides in the cytoplasm. It catalyses the reaction AMP + diphosphate = 5-phospho-alpha-D-ribose 1-diphosphate + adenine. It functions in the pathway purine metabolism; AMP biosynthesis via salvage pathway; AMP from adenine: step 1/1. Functionally, catalyzes a salvage reaction resulting in the formation of AMP, that is energically less costly than de novo synthesis. In Rhodospirillum rubrum (strain ATCC 11170 / ATH 1.1.1 / DSM 467 / LMG 4362 / NCIMB 8255 / S1), this protein is Adenine phosphoribosyltransferase.